A 278-amino-acid chain; its full sequence is Tumor necrosis factor ligand superfamily member 6 (278 aa).

The Cytoplasmic segment spans residues M1–E77. A disordered region spans residues P26–S68. Residues P33 to Q42 show a composition bias toward low complexity. A compositionally biased stretch (pro residues) spans R43–S68. The chain crosses the membrane as a helical; Signal-anchor for type II membrane protein span at residues L78–Y99. Residues Q100–L278 lie on the Extracellular side of the membrane. N116 is a glycosylation site (N-linked (GlcNAc...) asparagine). Positions E125–S135 are enriched in polar residues. Positions E125–T147 are disordered. The 137-residue stretch at S142–L278 folds into the THD domain. C199 and C230 are joined by a disulfide. N-linked (GlcNAc...) asparagine glycans are attached at residues N247 and N257.

This sequence belongs to the tumor necrosis factor family. In terms of assembly, homotrimer. Interacts with ARHGAP9, BAIAP2L1, BTK, CACNB3, CACNB4, CRK, DLG2, DNMBP, DOCK4, EPS8L3, FGR, FYB1, FYN, HCK, ITK, ITSN2, KALRN, LYN, MACC1, MIA, MPP4, MYO15A, NCF1, NCK1, NCK2, NCKIPSD, OSTF1, PIK3R1, PSTPIP1, RIMBP3C, SAMSN1, SH3GL3, SH3PXD2B, SH3PXD2A, SH3RF2, SKAP2, SNX33, SNX9, SORBS3, SPTA1, SRC, SRGAP1, SRGAP2, SRGAP3, TEC, TJP3 and YES1. The soluble form derives from the membrane form by proteolytic processing. The membrane-bound form undergoes two successive intramembrane proteolytic cleavages. The first one is processed by ADAM10 producing an N-terminal fragment, which lacks the receptor-binding extracellular domain. This ADAM10-processed FasL (FasL APL) remnant form is still membrane anchored and further processed by SPPL2A that liberates the FasL intracellular domain (FasL ICD). FasL shedding by ADAM10 is a prerequisite for subsequent intramembrane cleavage by SPPL2A in T-cells. Post-translationally, phosphorylated by FGR on tyrosine residues; this is required for ubiquitination and subsequent internalization. In terms of processing, N-glycosylated. Monoubiquitinated. Expressed in activated splenocytes and thymocytes. Moderate or weak expression found in small intestines, kidney and lung.

It is found in the cell membrane. The protein localises to the cytoplasmic vesicle lumen. The protein resides in the lysosome lumen. Its subcellular location is the secreted. It localises to the nucleus. Functionally, cytokine that binds to TNFRSF6/FAS, a receptor that transduces the apoptotic signal into cells. Involved in cytotoxic T-cell-mediated apoptosis, natural killer cell-mediated apoptosis and in T-cell development. Initiates fratricidal/suicidal activation-induced cell death (AICD) in antigen-activated T-cells contributing to the termination of immune responses. TNFRSF6/FAS-mediated apoptosis also has a role in the induction of peripheral tolerance. Binds to TNFRSF6B/DcR3, a decoy receptor that blocks apoptosis. Induces FAS-mediated activation of NF-kappa-B, initiating non-apoptotic signaling pathways. Can induce apoptosis but does not appear to be essential for this process. Its function is as follows. Cytoplasmic form induces gene transcription inhibition. The chain is Tumor necrosis factor ligand superfamily member 6 (Faslg) from Rattus norvegicus (Rat).